The primary structure comprises 207 residues: Large ribosomal subunit protein bL25 (207 aa).

It belongs to the bacterial ribosomal protein bL25 family. CTC subfamily. As to quaternary structure, part of the 50S ribosomal subunit; part of the 5S rRNA/L5/L18/L25 subcomplex. Contacts the 5S rRNA. Binds to the 5S rRNA independently of L5 and L18.

This is one of the proteins that binds to the 5S RNA in the ribosome where it forms part of the central protuberance. The sequence is that of Large ribosomal subunit protein bL25 from Bordetella petrii (strain ATCC BAA-461 / DSM 12804 / CCUG 43448).